The primary structure comprises 337 residues: tRNA N(3)-cytidine methyltransferase METTL2 (337 aa).

Positions 66, 70, 140, 165, 191, and 212 each coordinate S-adenosyl-L-methionine.

Belongs to the methyltransferase superfamily. METL family. As to quaternary structure, monomer.

The protein resides in the cytoplasm. It catalyses the reaction cytidine(32) in tRNA(Thr) + S-adenosyl-L-methionine = N(3)-methylcytidine(32) in tRNA(Thr) + S-adenosyl-L-homocysteine + H(+). The enzyme catalyses cytidine(32) in tRNA(Arg)(CCU) + S-adenosyl-L-methionine = N(3)-methylcytidine(32) in tRNA(Arg)(CCU) + S-adenosyl-L-homocysteine + H(+). Functionally, S-adenosyl-L-methionine-dependent methyltransferase that mediates N(3)-methylcytidine modification of residue 32 of the tRNA anticodon loop of tRNA(Thr)(UGU) and tRNA(Arg)(CCU). N(3)-methylcytidine methylation by mettl2 requires the N6-threonylcarbamoylation of tRNA (t6A37) by the EKC/KEOPS complex as prerequisite. The sequence is that of tRNA N(3)-cytidine methyltransferase METTL2 (mettl2) from Xenopus tropicalis (Western clawed frog).